A 518-amino-acid chain; its full sequence is G1/S-specific cyclin-E (518 aa).

Residues 1 to 193 (MAGRKSSRTT…DEETEDEFDL (193 aa)) form a disordered region. Residues 13–46 (PVKKAERKSAILSPHDELRERLLETSLDVKENIP) are compositionally biased toward basic and acidic residues. The segment covering 47-62 (ERSSSTRNESVGSQRS) has biased composition (polar residues). Over residues 82–107 (PSTEKKGNGSRDDSFSSVFSEDRETE) the composition is skewed to basic and acidic residues. The span at 108–119 (SSVGSTSSRTRG) shows a compositional bias: low complexity. The segment covering 135-154 (SSDHNAESEESRETPQSDEH) has biased composition (basic and acidic residues). Residues 155 to 192 (DGFEEDGDVEDDVSSDVNDEEDEYDEYEEDEETEDEFD) are compositionally biased toward acidic residues.

The protein belongs to the cyclin family. Cyclin E subfamily. In terms of assembly, interacts with a member of the CDK2/CDK protein kinases to form a serine/threonine kinase holoenzyme complex. The cyclin subunit imparts substrate specificity to the complex.

Its subcellular location is the nucleus. It is found in the cytoplasm. The protein localises to the cytoskeleton. It localises to the microtubule organizing center. The protein resides in the centrosome. Its subcellular location is the centriole. Its function is as follows. Essential for the control of the cell cycle at the G1/S (start) transition. In association with cdk-2, regulates proliferation, quiescent state and cell fate during the development of several cell lineages. In the embryo, initiates the establishment of cell polarity through the recruitment of the centrosomal proteins spd-2 and spd-5 during prophase. During the development of the vulva, controls the onset of vulval cell terminal differentiation by controlling the duration of G1 phase. During hypoderm development at early larval stages, controls syncytial fate of seam cell daughter cells. Involved in the progression of cell division in the intestinal lineage in larvae, and in particular in endoreplication, a specific growth pathway in the intestinal epithelium, required for feeding and gut development in growing larvae. By controlling the activity of translational repressor gld-1, regulates the pool of germline stem cells and the size of the mitotic zone by preventing entry into meiosis. In addition, repression of expression by gld-1 prevents mitosis re-entry in meiotic germline cells. The protein is G1/S-specific cyclin-E (cye-1) of Caenorhabditis briggsae.